The sequence spans 607 residues: Pyruvate decarboxylase 2 (607 aa).

Positions 1–22 (MDTKIGSIDACNPTNHDIGGPP) are disordered. Residues Asp69 and His156 each contribute to the substrate site. Positions 434–516 (DSWFNCQKLK…FLINNGGYTI (83 aa)) are thiamine pyrophosphate binding. 3 residues coordinate Mg(2+): Asp484, Asn511, and Gly513. Glu517 is a substrate binding site.

The protein belongs to the TPP enzyme family. In terms of assembly, homotetramer. A metal cation is required as a cofactor. Thiamine diphosphate serves as cofactor. In terms of tissue distribution, expressed at low levels in roots, shoots, flowers, siliques and seeds.

The catalysed reaction is a 2-oxocarboxylate + H(+) = an aldehyde + CO2. The sequence is that of Pyruvate decarboxylase 2 (PDC2) from Arabidopsis thaliana (Mouse-ear cress).